Consider the following 398-residue polypeptide: Ribosomal RNA large subunit methyltransferase F (398 aa).

Positions 1–12 (MTPSRKPARPGA) are enriched in basic residues. The tract at residues 1–85 (MTPSRKPARP…RNLHGQGYDF (85 aa)) is disordered. Low complexity-rich tracts occupy residues 20–40 (PSAK…AQPK) and 48–59 (QAKSQAKPQAKS).

It belongs to the methyltransferase superfamily. METTL16/RlmF family.

The protein resides in the cytoplasm. It carries out the reaction adenosine(1618) in 23S rRNA + S-adenosyl-L-methionine = N(6)-methyladenosine(1618) in 23S rRNA + S-adenosyl-L-homocysteine + H(+). Its function is as follows. Specifically methylates the adenine in position 1618 of 23S rRNA. The sequence is that of Ribosomal RNA large subunit methyltransferase F from Shewanella loihica (strain ATCC BAA-1088 / PV-4).